The sequence spans 134 residues: Protein NrdI (134 aa).

This sequence belongs to the NrdI family.

Functionally, probably involved in ribonucleotide reductase function. The polypeptide is Protein NrdI (Serratia proteamaculans (strain 568)).